The chain runs to 335 residues: Glyceraldehyde-3-phosphate dehydrogenase (335 aa).

Residues 10–11 (RI), aspartate 33, lysine 77, and threonine 119 each bind NAD(+). D-glyceraldehyde 3-phosphate contacts are provided by residues 150–152 (SCT), threonine 181, 210–211 (TG), and arginine 233. The active-site Nucleophile is cysteine 151. An NAD(+)-binding site is contributed by asparagine 315.

Belongs to the glyceraldehyde-3-phosphate dehydrogenase family. Homotetramer.

The protein localises to the cytoplasm. The enzyme catalyses D-glyceraldehyde 3-phosphate + phosphate + NAD(+) = (2R)-3-phospho-glyceroyl phosphate + NADH + H(+). It functions in the pathway carbohydrate degradation; glycolysis; pyruvate from D-glyceraldehyde 3-phosphate: step 1/5. Functionally, catalyzes the oxidative phosphorylation of glyceraldehyde 3-phosphate (G3P) to 1,3-bisphosphoglycerate (BPG) using the cofactor NAD. The first reaction step involves the formation of a hemiacetal intermediate between G3P and a cysteine residue, and this hemiacetal intermediate is then oxidized to a thioester, with concomitant reduction of NAD to NADH. The reduced NADH is then exchanged with the second NAD, and the thioester is attacked by a nucleophilic inorganic phosphate to produce BPG. The chain is Glyceraldehyde-3-phosphate dehydrogenase (gap) from Chlamydia muridarum (strain MoPn / Nigg).